Consider the following 579-residue polypeptide: Carotenoid-cleaving dioxygenase, mitochondrial (579 aa).

Fe cation contacts are provided by H226, H286, H357, and H573.

This sequence belongs to the carotenoid oxygenase family. Fe(2+) is required as a cofactor. In terms of tissue distribution, highly expressed in retinal pigment epithelium. Also expressed in stomach, small intestine, liver, testis, kidney, adrenal gland, pancreas, heart, skeletal muscle and prostate (at protein level).

The protein localises to the mitochondrion. It carries out the reaction all-trans-beta-carotene + O2 = beta-ionone + all-trans-10'-apo-beta-carotenal. The enzyme catalyses 5-cis-lycopene + O2 = 5-cis-10'-apo-lycopenal + (3E,5E)-6,10-dimethylundeca-3,5,9-trien-2-one. The catalysed reaction is 13-cis-lycopene + O2 = 13-cis-10'-apo-lycopenal + (3E,5E)-6,10-dimethylundeca-3,5,9-trien-2-one. It catalyses the reaction lutein + O2 = (3R,6R)-hydroxy-alpha-ionone + (3R)-3-hydroxy-10'-apo-beta-carotenal. It carries out the reaction lutein + O2 = (3R,6R)-3-hydroxy-10'-apo-alpha-carotenal + (3R)-hydroxy-beta-ionone. The enzyme catalyses all-trans-zeaxanthin + 2 O2 = 4,9-dimethyldodeca-2,4,6,8,10-pentaenedial + 2 (3R)-hydroxy-beta-ionone. The catalysed reaction is all-trans-zeaxanthin + O2 = (3R)-3-hydroxy-10'-apo-beta-carotenal + (3R)-hydroxy-beta-ionone. It catalyses the reaction beta-cryptoxanthin + O2 = all-trans-10'-apo-beta-carotenal + (3R)-hydroxy-beta-ionone. It carries out the reaction all-trans-10'-apo-beta-carotenal + O2 = beta-ionone + 4,9-dimethyldodeca-2,4,6,8,10-pentaenedial. The enzyme catalyses (3R)-3-hydroxy-10'-apo-beta-carotenal + O2 = 4,9-dimethyldodeca-2,4,6,8,10-pentaenedial + (3R)-hydroxy-beta-ionone. The catalysed reaction is (3R,6R)-3-hydroxy-10'-apo-alpha-carotenal + O2 = (3R,6R)-hydroxy-alpha-ionone + 4,9-dimethyldodeca-2,4,6,8,10-pentaenedial. Functionally, broad specificity mitochondrial dioxygenase that mediates the asymmetric oxidative cleavage of carotenoids. Cleaves carotenes (pure hydrocarbon carotenoids) such as all-trans-beta-carotene and lycopene as well as xanthophylls (oxygenated carotenoids) such as zeaxanthin, lutein and beta-cryptoxanthin at both the 9,10 and the 9',10' carbon-carbon double bond. Through its function in carotenoids metabolism regulates oxidative stress and the production of important signaling molecules. The polypeptide is Carotenoid-cleaving dioxygenase, mitochondrial (Homo sapiens (Human)).